Here is a 338-residue protein sequence, read N- to C-terminus: Biotin synthase (338 aa).

In terms of domain architecture, Radical SAM core spans 63 to 290 (NGVQLSTLLS…RAKVRLSAGR (228 aa)). Positions 78, 82, and 85 each coordinate [4Fe-4S] cluster. [2Fe-2S] cluster contacts are provided by Cys122, Cys153, Cys213, and Arg285.

This sequence belongs to the radical SAM superfamily. Biotin synthase family. Homodimer. [4Fe-4S] cluster serves as cofactor. The cofactor is [2Fe-2S] cluster.

The enzyme catalyses (4R,5S)-dethiobiotin + (sulfur carrier)-SH + 2 reduced [2Fe-2S]-[ferredoxin] + 2 S-adenosyl-L-methionine = (sulfur carrier)-H + biotin + 2 5'-deoxyadenosine + 2 L-methionine + 2 oxidized [2Fe-2S]-[ferredoxin]. The protein operates within cofactor biosynthesis; biotin biosynthesis; biotin from 7,8-diaminononanoate: step 2/2. Functionally, catalyzes the conversion of dethiobiotin (DTB) to biotin by the insertion of a sulfur atom into dethiobiotin via a radical-based mechanism. This chain is Biotin synthase, found in Nitrosomonas eutropha (strain DSM 101675 / C91 / Nm57).